The primary structure comprises 79 residues: ATP synthase subunit beta (79 aa).

It belongs to the ATPase alpha/beta chains family. As to quaternary structure, F-type ATPases have 2 components, CF(1) - the catalytic core - and CF(0) - the membrane proton channel. CF(1) has five subunits: alpha(3), beta(3), gamma(1), delta(1), epsilon(1). CF(0) has three main subunits: a(1), b(2) and c(9-12). The alpha and beta chains form an alternating ring which encloses part of the gamma chain. CF(1) is attached to CF(0) by a central stalk formed by the gamma and epsilon chains, while a peripheral stalk is formed by the delta and b chains.

The protein localises to the cell membrane. The catalysed reaction is ATP + H2O + 4 H(+)(in) = ADP + phosphate + 5 H(+)(out). In terms of biological role, produces ATP from ADP in the presence of a proton gradient across the membrane. The catalytic sites are hosted primarily by the beta subunits. This chain is ATP synthase subunit beta (atpD), found in Streptococcus downei (Streptococcus sobrinus).